The primary structure comprises 378 residues: Zinc transporter 7 (378 aa).

Over 1 to 37 the chain is Cytoplasmic; that stretch reads MLPLSIKDDEYKPPKFNLFGKISGWFRSILSDKTSRN. A helical transmembrane segment spans residues 38 to 58; sequence LFFFLCLNLSFAFVELLYGIW. Residues 59 to 67 lie on the Lumenal side of the membrane; it reads SNCLGLISD. Residues 68–88 form a helical membrane-spanning segment; sequence SFHMFFDSTAILAGLAASVIS. At 89-102 the chain is on the cytoplasmic side; sequence KWRDNDAFSYGYVR. Residues 103 to 123 form a helical membrane-spanning segment; sequence AEVLAGFVNGLFLIFTAFFIF. The Lumenal segment spans residues 124–140; the sequence is SEGVERALAPPDVHHER. A helical transmembrane segment spans residues 141–161; it reads LLLVSILGFVVNLVGIFVFNH. Positions 161 to 220 are his-rich loop; it reads HGGHGHSHGSGHGHSHSLFNGALDHSHGHEDHCHSHEAKHGAAHSHDHDHAHGHGHLHSH. Residues 162 to 238 lie on the Cytoplasmic side of the membrane; it reads GGHGHSHGSG…AGPSRQILQG (77 aa). Residues 186–223 show a composition bias toward basic and acidic residues; it reads SHGHEDHCHSHEAKHGAAHSHDHDHAHGHGHLHSHDGP. Positions 186–224 are disordered; that stretch reads SHGHEDHCHSHEAKHGAAHSHDHDHAHGHGHLHSHDGPS. The chain crosses the membrane as a helical span at residues 239 to 259; that stretch reads VFLHILADTLGSIGVIASAIM. Residues 260–264 are Lumenal-facing; that stretch reads MQNFG. A helical transmembrane segment spans residues 265–285; it reads LMIADPICSILIAILIVVSVI. The Cytoplasmic segment spans residues 286-378; it reads PLLRESVGIL…LYVQIDFAAM (93 aa).

Belongs to the cation diffusion facilitator (CDF) transporter (TC 2.A.4) family. SLC30A subfamily. Homooligomer. Highly expressed in liver, spleen, duodenum and part of the jejunum of small intestine (at protein level). Moderately expressed in kidney, lung, and brain. Barely detectable in heart. In brain, expressed in cerebellum, cerebral cortex and hippocampus (at protein level).

The protein localises to the golgi apparatus membrane. Its subcellular location is the cytoplasmic vesicle. The protein resides in the golgi apparatus. It is found in the trans-Golgi network. It localises to the sarcoplasmic reticulum. The protein localises to the mitochondrion. The catalysed reaction is Zn(2+)(in) = Zn(2+)(out). Its function is as follows. Zinc ion transporter mediating zinc entry from the cytosol into the lumen of organelles along the secretory pathway. By contributing to zinc ion homeostasis within the early secretory pathway, regulates the activation and folding of enzymes like alkaline phosphatases. In Mus musculus (Mouse), this protein is Zinc transporter 7.